The sequence spans 714 residues: Kinesin-like protein KIN-13 (714 aa).

One can recognise an SAM domain in the interval 1-63 (MSDLVYQWLE…FRLITTLKSR (63 aa)). A compositionally biased stretch (polar residues) spans 69 to 81 (QQPSAPNTGATPQ). Disordered regions lie at residues 69 to 109 (QQPS…NDIQ) and 122 to 161 (GGYEPPYVSAQGSGPANGDDYVIPTIPYHPNAPNPPNPRG). The span at 82–92 (SVPSSHVSPHV) shows a compositional bias: low complexity. The span at 151 to 160 (PNAPNPPNPR) shows a compositional bias: pro residues. The Kinesin motor domain maps to 183 to 515 (RIRVVIRKRP…LRYADRVKEL (333 aa)). Residue 273-280 (GQTGSGKS) coordinates ATP.

Belongs to the TRAFAC class myosin-kinesin ATPase superfamily. Kinesin family. KIN-13 subfamily. Interacts with PLK. Post-translationally, phosphorylated by PLK.

It localises to the cytoplasm. The protein resides in the cytoskeleton. Its subcellular location is the cell projection. The protein localises to the cilium. It is found in the flagellum. It localises to the flagellum basal body. The protein resides in the flagellum axoneme. Its subcellular location is the spindle. The protein localises to the chromosome. It is found in the centromere. It localises to the kinetochore. Functionally, involved in cell cycle. Involved in formation of flagella, regulation of flagellar length, and formation of median bodies during interphase. Regulates flagellar length in all eight distal flagellar tips by promoting disassembly of the microtubules. Disassembles microtubules at the distal flagellar tips in a length-dependent manner in order to maintain different equilibrium lengths of the four flagellar pairs. Regulates interphase and mitotic microtubule dynamics. Regulates microtubule disassembly dynamics of the dual mitotic spindles and the median body. This chain is Kinesin-like protein KIN-13, found in Giardia intestinalis (strain ATCC 50803 / WB clone C6) (Giardia lamblia).